The following is a 307-amino-acid chain: Probable thioesterase KK1J (307 aa).

It belongs to the AMT4 thioesterase family.

Its pathway is secondary metabolite biosynthesis. In terms of biological role, probable thioesterase; part of the gene cluster that mediates the biosynthesis of KK-1, a novel cyclic depsipeptide with 10 residues which is a promising active compound with high activity against many plant pathogens, especially Botrytis cinerea. Within the pathway, kk1J is not essential for the biosynthesis of KK-1, but plays a role for efficient production via correction of peptide chain synthesis by kk1B. The nonribosomal peptide synthetase (NRPS) kk1B catalyzes the elongation and cyclization of the decapeptide chain composed of 1 D-lactic acid residue (D-Lac), 1 pipecolic acid residue (Pip), 1 aspartic acid residue (Asp), 1 isoleucine residue (Ile), 1 glycine residue (Gly), 1 tyrosine residue (Tyr) and 4 valine residues (Val). The Asp, Ile and 3 Val residues are N-methylated by the 5 methyltransferase domains from the NRPS (found in modules 3, 5, 6, 7 and 9), whereas the Tyr residue is O-methylated by the cluster encoded O-methyltransferase kk1A. The thioesterase kk1J is likely to be involved in the corrective mechanism of peptide chain synthesis. The D-lactate dehydrogenase kk1H is involved in the synthesis of D-lactic acid from pyruvic acid, which is recognized by the A domain of the first kk1B module. The pyrroline-5-carboxylate reductase kk1I is involved in the synthesis of the L-pipecolic acid residue of KK-1 from delta-1-pyrroline-5-carboxylate (P5C), a metabolic intermediate of lysine. It still is unclear how kk1C and kk1D are involved in the production of KK-1. The chain is Probable thioesterase KK1J from Curvularia clavata.